A 53-amino-acid polypeptide reads, in one-letter code: Mannose/glucose-specific lectin alpha 2 chain (53 aa).

Belongs to the leguminous lectin family. Tetramer of two alpha and two beta chains.

The sequence is that of Mannose/glucose-specific lectin alpha 2 chain from Lathyrus ochrus (Cyprus-vetch).